Consider the following 246-residue polypeptide: MAGHSKWANIKHRKAAQDAQRGKIFTKLIRELVTAAKLGGGDVGANPRLRAAVDKALSNNMTRDTINRAIERGVGGGDGTNMETRIYEGYGPGGTAVMVECLSDNANRTISQVRPSFTKCGGNLGTEGSVGYLFSKKGLILVESADEDALTEAAIEAGADDIQVQEDGSVEIYTAWEDLGLVKDGIEVAGFKVVNAEVTMIPSTMVDLDAETAPKLLRLIDMLEDCDDVQNVYHNGEISDEVAALL.

Belongs to the TACO1 family.

It is found in the cytoplasm. This Histophilus somni (strain 2336) (Haemophilus somnus) protein is Probable transcriptional regulatory protein HSM_1763.